We begin with the raw amino-acid sequence, 162 residues long: SsrA-binding protein (162 aa).

The protein belongs to the SmpB family.

It localises to the cytoplasm. In terms of biological role, required for rescue of stalled ribosomes mediated by trans-translation. Binds to transfer-messenger RNA (tmRNA), required for stable association of tmRNA with ribosomes. tmRNA and SmpB together mimic tRNA shape, replacing the anticodon stem-loop with SmpB. tmRNA is encoded by the ssrA gene; the 2 termini fold to resemble tRNA(Ala) and it encodes a 'tag peptide', a short internal open reading frame. During trans-translation Ala-aminoacylated tmRNA acts like a tRNA, entering the A-site of stalled ribosomes, displacing the stalled mRNA. The ribosome then switches to translate the ORF on the tmRNA; the nascent peptide is terminated with the 'tag peptide' encoded by the tmRNA and targeted for degradation. The ribosome is freed to recommence translation, which seems to be the essential function of trans-translation. The chain is SsrA-binding protein from Granulibacter bethesdensis (strain ATCC BAA-1260 / CGDNIH1).